The following is a 199-amino-acid chain: Holliday junction branch migration complex subunit RuvA (199 aa).

Residues 1–65 form a domain I region; that stretch reads MIASLRGKLL…DRGQRLFGFG (65 aa). The segment at 66–144 is domain II; the sequence is SKKDRESFEL…KFEMFLNEGT (79 aa). Residues 145-155 form a flexible linker region; it reads TESSFVDRETD. A domain III region spans residues 155–199; it reads DLATLALIQLGFDEKSATKQVADAKKLNPGLSASDIVKQVITGTR.

The protein belongs to the RuvA family. In terms of assembly, homotetramer. Forms an RuvA(8)-RuvB(12)-Holliday junction (HJ) complex. HJ DNA is sandwiched between 2 RuvA tetramers; dsDNA enters through RuvA and exits via RuvB. An RuvB hexamer assembles on each DNA strand where it exits the tetramer. Each RuvB hexamer is contacted by two RuvA subunits (via domain III) on 2 adjacent RuvB subunits; this complex drives branch migration. In the full resolvosome a probable DNA-RuvA(4)-RuvB(12)-RuvC(2) complex forms which resolves the HJ.

It is found in the cytoplasm. The RuvA-RuvB-RuvC complex processes Holliday junction (HJ) DNA during genetic recombination and DNA repair, while the RuvA-RuvB complex plays an important role in the rescue of blocked DNA replication forks via replication fork reversal (RFR). RuvA specifically binds to HJ cruciform DNA, conferring on it an open structure. The RuvB hexamer acts as an ATP-dependent pump, pulling dsDNA into and through the RuvAB complex. HJ branch migration allows RuvC to scan DNA until it finds its consensus sequence, where it cleaves and resolves the cruciform DNA. The polypeptide is Holliday junction branch migration complex subunit RuvA (Leptospira biflexa serovar Patoc (strain Patoc 1 / Ames)).